A 590-amino-acid chain; its full sequence is Phosphatidylserine decarboxylase proenzyme 1, mitochondrial (590 aa).

The transit peptide at 1–59 directs the protein to the mitochondrion; the sequence is MPLKPISFRWSKTSVRSVPNPFMYGPDNLNKPLSRASQMAERVHQQTPSSTNYQQRRYF. Residues 60–140 are Mitochondrial matrix-facing; sequence SYYYYQFPKI…GKERRRFIRW (81 aa). Residues 141–159 form a helical membrane-spanning segment; it reads WTVTSLTIVLGGVYAKIKY. Residues 160 to 590 are Mitochondrial intermembrane-facing; it reads ERGDHEENPY…KVGQSLGGFV (431 aa). Catalysis depends on charge relay system; for autoendoproteolytic cleavage activity residues Asp-260, His-403, and Ser-558. Ser-558 serves as the catalytic Schiff-base intermediate with substrate; via pyruvic acid; for decarboxylase activity. Ser-558 carries the pyruvic acid (Ser); by autocatalysis modification.

The protein belongs to the phosphatidylserine decarboxylase family. PSD-B subfamily. Eukaryotic type I sub-subfamily. In terms of assembly, heterodimer of a large membrane-associated beta subunit and a small pyruvoyl-containing alpha subunit. It depends on pyruvate as a cofactor. Post-translationally, is synthesized initially as an inactive proenzyme. Formation of the active enzyme involves a self-maturation process in which the active site pyruvoyl group is generated from an internal serine residue via an autocatalytic post-translational modification. Two non-identical subunits are generated from the proenzyme in this reaction, and the pyruvate is formed at the N-terminus of the alpha chain, which is derived from the carboxyl end of the proenzyme. The autoendoproteolytic cleavage occurs by a canonical serine protease mechanism, in which the side chain hydroxyl group of the serine supplies its oxygen atom to form the C-terminus of the beta chain, while the remainder of the serine residue undergoes an oxidative deamination to produce ammonia and the pyruvoyl prosthetic group on the alpha chain. During this reaction, the Ser that is part of the protease active site of the proenzyme becomes the pyruvoyl prosthetic group, which constitutes an essential element of the active site of the mature decarboxylase.

Its subcellular location is the mitochondrion inner membrane. It carries out the reaction a 1,2-diacyl-sn-glycero-3-phospho-L-serine + H(+) = a 1,2-diacyl-sn-glycero-3-phosphoethanolamine + CO2. It functions in the pathway phospholipid metabolism; phosphatidylethanolamine biosynthesis; phosphatidylethanolamine from CDP-diacylglycerol: step 2/2. Functionally, catalyzes the formation of phosphatidylethanolamine (PtdEtn) from phosphatidylserine (PtdSer). Plays a central role in phospholipid metabolism and in the interorganelle trafficking of phosphatidylserine. Important for virulence. This is Phosphatidylserine decarboxylase proenzyme 1, mitochondrial from Candida albicans (strain SC5314 / ATCC MYA-2876) (Yeast).